Reading from the N-terminus, the 856-residue chain is Rod cGMP-specific 3',5'-cyclic phosphodiesterase subunit beta (856 aa).

Ser2 bears the N-acetylserine mark. 2 consecutive GAF domains span residues 71 to 220 (NMER…TLNL) and 252 to 429 (DIER…GWSV). The PDEase domain maps to 481-814 (EEDELGILLK…KEWKALADEY (334 aa)). Catalysis depends on His557, which acts as the Proton donor. A divalent metal cation contacts are provided by His561, His597, Asp598, and Asp718. Residues 823 to 833 (EEKQQQEDRTT) are compositionally biased toward basic and acidic residues. The disordered stretch occupies residues 823-842 (EEKQQQEDRTTAKKAGTEIC). A lipid anchor (S-geranylgeranyl cysteine) is attached at Cys853. Positions 854 to 856 (CIL) are cleaved as a propeptide — removed in mature form.

Belongs to the cyclic nucleotide phosphodiesterase family. In terms of assembly, oligomer composed of two catalytic chains (alpha and beta), an inhibitory chain (gamma) and the delta chain. It depends on a divalent metal cation as a cofactor.

The protein localises to the membrane. It localises to the cell projection. The protein resides in the cilium. Its subcellular location is the photoreceptor outer segment. The catalysed reaction is 3',5'-cyclic GMP + H2O = GMP + H(+). Rod-specific cGMP phosphodiesterase that catalyzes the hydrolysis of 3',5'-cyclic GMP. Necessary for the formation of a functional phosphodiesterase holoenzyme. Involved in retinal circadian rhythm photoentrainment via modulation of UVA and orange light-induced phase-shift of the retina clock. May participate in processes of transmission and amplification of the visual signal. This Canis lupus familiaris (Dog) protein is Rod cGMP-specific 3',5'-cyclic phosphodiesterase subunit beta.